We begin with the raw amino-acid sequence, 70 residues long: uncharacterized protein (70 aa).

This is an uncharacterized protein from Homo sapiens (Human).